The primary structure comprises 99 residues: Small ribosomal subunit protein cS23 (99 aa).

The protein belongs to the chloroplast-specific ribosomal protein cS23 family. Part of the 30S ribosomal subunit.

It is found in the plastid. The protein localises to the chloroplast. Functionally, probably a ribosomal protein or a ribosome-associated protein. In Gracilaria tenuistipitata var. liui (Red alga), this protein is Small ribosomal subunit protein cS23.